A 478-amino-acid polypeptide reads, in one-letter code: PRAME family member 27 (478 aa).

One copy of the LRR 1 repeat lies at 17–40 (RSLLRDQALAMSTLEELPTELFPP). The stretch at 99 to 126 (RWKLQVLDLQDVCENFWMVWSEAMARGS) is one LRR 1; degenerate repeat. An LRR 2; degenerate repeat occupies 181–205 (HLCCKKLKILGMPFRNIRSILKMVN). The LRR 3; degenerate repeat unit spans residues 206 to 232 (LDCIQEVEVNCKWVLPILTQFTPYLGH). One copy of the LRR 4; degenerate repeat lies at 233–268 (MRNLQKLVLSHMDVSRYVSPEQKKEIVTQFTTQFLK). LRR repeat units lie at residues 269–294 (LHCL…LSCL), 295–326 (KTSL…SQLK), 327–348 (TLDL…ILLE), 351–378 (AATL…ALSR), and 379–403 (CFEL…LLSH).

Belongs to the PRAME family.

The polypeptide is PRAME family member 27 (Homo sapiens (Human)).